The following is a 528-amino-acid chain: MLNVPSQAFPAPGSQQRVSSQGRSKVPLKQGRSLMDWIRLTKSGKDLTGLKGGLIEVTEEELKKHNKKEDCWICIRGFVYNVSPYMEYHPGGEDELMRAAGADGTDLFNEVHRWVNYESMLKECLVGRMAVKPAVPKDCHEGKRVLNGMLPKSQMSDTLPRDVTDTLPREDLSSPSYDWFQTESSVTIVVYTKQKNISLDSVIVDLQDDSLRAEAVIKDHSYLVHVGLSHEVQENFSVRVIENVGKIEIVLQKKESVSWQCLGDHLEKHDSFIPKKDTGLYYRRCQLISKEDVTHDTRLFCLMLPPSTHLQVPVGQHVYLKLSVTGAEIVKPYTPVSDSLLSDFKEPVLSPNKYICFLIKIYPAGLFTPELDRLQIGDFISVSGPEGDFKVSKLQEVEDLFLLAAGTGFTPMVTVLNYALSHMSSLRKVKLMFFNKTEDDIIWRCQLEKLALREKRFDVEFVLSAPSPEWNGKQGHISRALLSEFLQRSSENSRAFLCICGPTPFTDEGIRLLHDLNFSDDEIHGFTA.

Position 1 is an N-acetylmethionine (M1). Positions 1–29 are disordered; that stretch reads MLNVPSQAFPAPGSQQRVSSQGRSKVPLK. Residues 13–24 are compositionally biased toward low complexity; it reads GSQQRVSSQGRS. Residues 54-130 enclose the Cytochrome b5 heme-binding domain; it reads LIEVTEEELK…LKECLVGRMA (77 aa). H89 and H112 together coordinate heme. The 92-residue stretch at 172 to 263 folds into the CS domain; sequence LSSPSYDWFQ…KESVSWQCLG (92 aa). The region spanning 280 to 392 is the FAD-binding FR-type domain; it reads LYYRRCQLIS…SGPEGDFKVS (113 aa). FAD is bound by residues 372–387 and 399–431; these read DRLQ…GPEG and DLFL…KVKL.

It belongs to the flavoprotein pyridine nucleotide cytochrome reductase family. The cofactor is FAD. As to expression, ubiquitously expressed. Isoform 2 is expressed in testis, brain, skeletal muscle and in the male germline.

It is found in the endoplasmic reticulum. The catalysed reaction is 2 Fe(III)-[cytochrome b5] + NADH = 2 Fe(II)-[cytochrome b5] + NAD(+) + H(+). Functionally, NADH-cytochrome b5 reductase involved in endoplasmic reticulum stress response pathway. Plays a critical role in protecting pancreatic beta-cells against oxidant stress, possibly by protecting the cell from excess buildup of reactive oxygen species (ROS). The chain is Cytochrome b5 reductase 4 (Cyb5r4) from Mus musculus (Mouse).